Reading from the N-terminus, the 199-residue chain is Superoxide dismutase [Mn] (199 aa).

Residues histidine 27, histidine 76, aspartate 160, and histidine 164 each coordinate Mn(2+).

It belongs to the iron/manganese superoxide dismutase family. Mn(2+) is required as a cofactor.

The catalysed reaction is 2 superoxide + 2 H(+) = H2O2 + O2. Functionally, destroys superoxide anion radicals which are normally produced within the cells and which are toxic to biological systems. In Corynebacterium diphtheriae (strain ATCC 700971 / NCTC 13129 / Biotype gravis), this protein is Superoxide dismutase [Mn] (sodA).